Consider the following 303-residue polypeptide: Deoxyhypusine hydroxylase (303 aa).

HEAT-like PBS-type repeat units follow at residues 56–82 (LKHE…VLQD) and 89–115 (VRHE…YAQD). Fe cation is bound by residues histidine 58, histidine 91, and glutamate 92. Residues 139 to 158 (DSPDTNPYLSVDPAPPAEEK) form a disordered region. 3 HEAT-like PBS-type repeats span residues 176-202 (HRYR…GLQI), 207-233 (FRHE…ALER), and 240-266 (VRHE…HVGD). Fe cation is bound by residues histidine 209, histidine 242, and glutamate 243.

This sequence belongs to the deoxyhypusine hydroxylase family. It depends on Fe(2+) as a cofactor.

It catalyses the reaction [eIF5A protein]-deoxyhypusine + AH2 + O2 = [eIF5A protein]-hypusine + A + H2O. Its pathway is protein modification; eIF5A hypusination. Catalyzes the hydroxylation of the N(6)-(4-aminobutyl)-L-lysine intermediate produced by deoxyhypusine synthase/DHPS on a critical lysine of the eukaryotic translation initiation factor 5A/eIF-5A. This is the second step of the post-translational modification of that lysine into an unusual amino acid residue named hypusine. Hypusination is unique to mature eIF-5A factor and is essential for its function. The polypeptide is Deoxyhypusine hydroxylase (dohh) (Xenopus laevis (African clawed frog)).